Reading from the N-terminus, the 499-residue chain is Serine/threonine-protein kinase RHS3 (499 aa).

Residues 1–92 (MLLKPGNKLV…NSSKPHTGGD (92 aa)) are disordered. Positions 39-55 (QKQVEQNTKKIEEHQIK) are enriched in basic and acidic residues. Over residues 63 to 85 (SNHNVNMSSQSNNSESTSTNNSS) the composition is skewed to low complexity. The Protein kinase domain occupies 113–436 (FRVLKRLGYG…ATEIKQHPFF (324 aa)). ATP-binding positions include 119–127 (LGYGDIGSV) and Lys144. The active-site Proton acceptor is the Asp240. In terms of domain architecture, AGC-kinase C-terminal spans 437 to 499 (EGVNWALIRG…DPDYIVFEYF (63 aa)).

The protein belongs to the protein kinase superfamily. AGC Ser/Thr protein kinase family. As to quaternary structure, interacts with PDPK1/PDK1. In terms of processing, autophosphorylated and phosphorylated by PDPK1/PDK1. Specifically expressed in root hair cells.

It catalyses the reaction L-seryl-[protein] + ATP = O-phospho-L-seryl-[protein] + ADP + H(+). The catalysed reaction is L-threonyl-[protein] + ATP = O-phospho-L-threonyl-[protein] + ADP + H(+). Its activity is regulated as follows. Activated by PDPK1/PDK1. In terms of biological role, involved in root hair growth and morphogenesis. In Arabidopsis thaliana (Mouse-ear cress), this protein is Serine/threonine-protein kinase RHS3.